Reading from the N-terminus, the 734-residue chain is Sulfate transporter (734 aa).

Over residues 1 to 11 (MSLKNGEQNDL) the composition is skewed to polar residues. The disordered stretch occupies residues 1–38 (MSLKNGEQNDLSPKDSVKGNDQYRSPSGIHVEHEEESR). Phosphoserine occurs at positions 12 and 16. 2 consecutive transmembrane segments (helical) span residues 113–133 (MMSG…YSLL) and 138–158 (PIYG…LGTS). Residues Asn-194 and Asn-204 are each glycosylated (N-linked (GlcNAc...) asparagine). 8 helical membrane-spanning segments follow: residues 222 to 242 (FVAG…VSVY), 247 to 267 (LLGG…VKYL), 269 to 289 (GLSL…IHIF), 292 to 312 (IHKT…VLLP), 379 to 399 (VDAI…SEMF), 415 to 435 (AIGF…SAAL), 453 to 473 (VMTA…FFSL), and 519 to 539 (LIST…CVIL). Residues 563 to 714 (AYKNLQAKSG…YSVYEAMTFA (152 aa)) enclose the STAS domain.

It belongs to the SLC26A/SulP transporter (TC 2.A.53) family. In terms of processing, N-glycosylated.

It is found in the cell membrane. Its subcellular location is the apical cell membrane. It catalyses the reaction oxalate(in) + sulfate(out) = oxalate(out) + sulfate(in). It carries out the reaction sulfate(out) + 2 chloride(in) = sulfate(in) + 2 chloride(out). The enzyme catalyses oxalate(out) + 2 chloride(in) = oxalate(in) + 2 chloride(out). The catalysed reaction is bromide(in) + chloride(out) = bromide(out) + chloride(in). It catalyses the reaction nitrate(in) + chloride(out) = nitrate(out) + chloride(in). It carries out the reaction iodide(in) + chloride(out) = iodide(out) + chloride(in). Its function is as follows. Sulfate transporter which mediates sulfate uptake into chondrocytes in order to maintain adequate sulfation of proteoglycans which is needed for cartilage development. Mediates electroneutral anion exchange of sulfate ions for oxalate ions, sulfate and oxalate ions for chloride and/or hydroxyl ions and chloride ions for bromide, iodide and nitrate ions. The coupling of sulfate transport to both hydroxyl and chloride ions likely serves to ensure transport at both acidic pH when most sulfate uptake is mediated by sulfate-hydroxide exchange and alkaline pH when most sulfate uptake is mediated by sulfate-chloride exchange. Essential for chondrocyte proliferation, differentiation and cell size expansion. In Ovis aries (Sheep), this protein is Sulfate transporter (SLC26A2).